The following is a 264-amino-acid chain: uncharacterized protein (264 aa).

The stretch at 19 to 45 (AQEESMEQLKDINTKIDNSEKKISLEN) forms a coiled coil.

This is an uncharacterized protein from Acanthamoeba polyphaga mimivirus (APMV).